Reading from the N-terminus, the 1140-residue chain is uncharacterized protein (1140 aa).

Disordered stretches follow at residues 1-49 (MGSS…TSPE), 97-243 (SSDI…STIS), 280-427 (TSSS…KSSV), 512-541 (ASSTLGSKVSSSNSRMATSKTSSTSSDLSK), 702-747 (FSTP…STAS), 916-1059 (CPEK…PIGR), and 1080-1103 (LSSSTEKVNRSTTKPTAAIHGTSS). Polar residues predominate over residues 105–129 (VNDVESSTSGPSNSYSALSSTNAQL). 3 stretches are compositionally biased toward low complexity: residues 130-154 (SSSTTETDSISSSAIQTSSPQTSSS), 172-214 (TTAS…TTSD), and 221-243 (SSSTSDVSSLLSSTSSPASSTIS). A compositionally biased stretch (polar residues) spans 516–528 (LGSKVSSSNSRMA). Composition is skewed to low complexity over residues 529-541 (TSKTSSTSSDLSK) and 703-718 (STPESSPTTSTLVTSE). Residues 719–733 (APSTVSSMTTSAPFI) show a composition bias toward polar residues. A compositionally biased stretch (low complexity) spans 734–747 (NNSTSARPSPSTAS). Basic and acidic residues predominate over residues 949-961 (SFKDMKTSQETKK). Low complexity predominate over residues 977–997 (EKTSPTTKASPSTSPSESKAA). 3 stretches are compositionally biased toward polar residues: residues 998–1023 (GNTSVATNASPSTSPSESQGTGSTSV), 1031–1055 (TKNSEGVSTTKAKNTSTVAKSSTES), and 1089–1103 (RSTTKPTAAIHGTSS).

This is an uncharacterized protein from Saccharomyces cerevisiae (strain ATCC 204508 / S288c) (Baker's yeast).